The chain runs to 591 residues: Aspartate--tRNA(Asp/Asn) ligase (591 aa).

Glu-176 is an L-aspartate binding site. The segment at 200 to 203 (QLFK) is aspartate. Arg-222 is a binding site for L-aspartate. Residues 222-224 (RDE) and Gln-231 each bind ATP. L-aspartate is bound at residue His-450. Glu-484 contacts ATP. Position 491 (Arg-491) interacts with L-aspartate. 536–539 (GLDR) is an ATP binding site.

The protein belongs to the class-II aminoacyl-tRNA synthetase family. Type 1 subfamily. Homodimer.

The protein localises to the cytoplasm. The enzyme catalyses tRNA(Asx) + L-aspartate + ATP = L-aspartyl-tRNA(Asx) + AMP + diphosphate. In terms of biological role, aspartyl-tRNA synthetase with relaxed tRNA specificity since it is able to aspartylate not only its cognate tRNA(Asp) but also tRNA(Asn). Reaction proceeds in two steps: L-aspartate is first activated by ATP to form Asp-AMP and then transferred to the acceptor end of tRNA(Asp/Asn). This is Aspartate--tRNA(Asp/Asn) ligase from Bacillus cereus (strain G9842).